A 480-amino-acid chain; its full sequence is Trigger factor (480 aa).

The PPIase FKBP-type domain maps to 161-249 (GDRLLITGKF…VVEVLKEQLP (89 aa)). Residues 426–480 (TEEPVEKEAEEKNEEFAIDHEVLPTKDHDAIPAAKYDDNTPKGAETEDKQEKDKD) are disordered. Positions 429–480 (PVEKEAEEKNEEFAIDHEVLPTKDHDAIPAAKYDDNTPKGAETEDKQEKDKD) are enriched in basic and acidic residues.

The protein belongs to the FKBP-type PPIase family. Tig subfamily.

The protein localises to the cytoplasm. It carries out the reaction [protein]-peptidylproline (omega=180) = [protein]-peptidylproline (omega=0). Functionally, involved in protein export. Acts as a chaperone by maintaining the newly synthesized protein in an open conformation. Functions as a peptidyl-prolyl cis-trans isomerase. The sequence is that of Trigger factor from Rhodopirellula baltica (strain DSM 10527 / NCIMB 13988 / SH1).